The following is a 317-amino-acid chain: tRNA dimethylallyltransferase (317 aa).

Glycine 14 to serine 21 is an ATP binding site. Threonine 16–serine 21 provides a ligand contact to substrate. Interaction with substrate tRNA stretches follow at residues aspartate 39 to leucine 42 and glutamine 163 to arginine 167.

It belongs to the IPP transferase family. As to quaternary structure, monomer. Requires Mg(2+) as cofactor.

It catalyses the reaction adenosine(37) in tRNA + dimethylallyl diphosphate = N(6)-dimethylallyladenosine(37) in tRNA + diphosphate. Functionally, catalyzes the transfer of a dimethylallyl group onto the adenine at position 37 in tRNAs that read codons beginning with uridine, leading to the formation of N6-(dimethylallyl)adenosine (i(6)A). The chain is tRNA dimethylallyltransferase from Xylella fastidiosa (strain M23).